The chain runs to 487 residues: MDPNSLKTGGLLLPTIERQCASPPSVIVIGGGISGVAAARALSNASFEVTVLESRDRVGGRVHTDYSFGCPIDMGASWLHGVCNENSLAPLIGYLGLKLYRTSGDNSVLYDHDLESYALFDKAGHQVSKETVAKVEETFERILDETVKVRDEQEHDMPLLQAISLVLERHPHLKLQGIDDQVLQWCVCRLEAWFAADADEISLKNWDQEHVLTGGHGLMVNGYYPIIQALAQGLDIRLNQRVTKIARQFNGVTVTTEDGTSYSADACIITVPLGVLKANIIKFEPELPSWKSSAIADLGVGIENKIAMHFDTVFWPNVEVLGMVGPTPKACGYFLNLHKATGNPVLVYMAAGRFAQEVEKLSDKEAVDLVMSHLKKMLPDATEPTKYLVSRWGSDPNSLGSYSCDLVGKPADVSARFAAPVENLYFAGEAASADHSGSVHGAYSSGIAAADECRKRILMQKGIPDLVQVKAYEEMAGVIAPLQICRT.

Residues Glu53, Arg61, Val242, and Glu429 each coordinate FAD. The Microbody targeting signal signature appears at 485–487 (CRT).

It belongs to the flavin monoamine oxidase family. It depends on FAD as a cofactor. Widely expressed.

It is found in the peroxisome. It carries out the reaction spermine + O2 + H2O = 3-aminopropanal + spermidine + H2O2. The catalysed reaction is norspermine + O2 + H2O = norspermidine + 3-aminopropanal + H2O2. The enzyme catalyses thermospermine + O2 + H2O = 3-aminopropanal + spermidine + H2O2. It functions in the pathway amine and polyamine degradation; spermine degradation. Functionally, flavoenzyme involved in polyamine back-conversion. Catalyzes the oxidation of the secondary amino group of polyamines, such as spermine. Substrate preference is spermine &gt; thermospermine &gt; norspermine. No activity detected when putrescine, spermidine or N(1)-acetylspermidine are used as substrates. Plays an important role in the regulation of polyamine intracellular concentration. This chain is Polyamine oxidase 4, found in Oryza sativa subsp. japonica (Rice).